A 210-amino-acid polypeptide reads, in one-letter code: Redox-sensing transcriptional repressor Rex (210 aa).

The segment at residues 17 to 56 is a DNA-binding region (H-T-H motif); sequence KYHRYLNELMKNDVDRISSKELGEKIGFTASQIRQDLNCF. An NAD(+)-binding site is contributed by 91 to 96; it reads GAGNIG.

This sequence belongs to the transcriptional regulatory Rex family. In terms of assembly, homodimer.

The protein localises to the cytoplasm. In terms of biological role, modulates transcription in response to changes in cellular NADH/NAD(+) redox state. The polypeptide is Redox-sensing transcriptional repressor Rex (Clostridium botulinum (strain Alaska E43 / Type E3)).